Reading from the N-terminus, the 123-residue chain is Sterol carrier protein 2 (123 aa).

Positions 16-113 (KEHLSTDAGK…GSLSAAQKFT (98 aa)) constitute an SCP2 domain. A Microbody targeting signal motif is present at residues 121–123 (SKL).

Expressed in most tissues including seedlings, cotyledons, inflorescence, leaves, stems, roots, siliques and flower buds, with the highest levels in floral tissues and in maturing seeds.

It localises to the peroxisome. Its function is as follows. Enhances the transfer of lipids between membranes in vitro. Active on phosphatidylcholine (PC), 1-palmitoyl 2-oleoyl phosphatidylcholine (POPC) and ergosterol, and, to a lower extent, dimyristoyl phosphatidic acid, stigmasterol, desmosterol, beta-sitosterol and steryl glucoside. Inactive or poorly active on palmitic acid, stearoyl-coenzyme A, cholesterol, glucosylceramide and ceramide. Required during seeds and seedlings development. The protein is Sterol carrier protein 2 of Arabidopsis thaliana (Mouse-ear cress).